The chain runs to 650 residues: Cytosolic Fe-S cluster assembly factor NAR1 (650 aa).

8 residues coordinate [4Fe-4S] cluster: cysteine 22, cysteine 81, cysteine 84, cysteine 87, cysteine 215, cysteine 270, cysteine 480, and cysteine 484.

This sequence belongs to the NARF family.

Component of the cytosolic Fe/S protein assembly machinery. Required for maturation of extramitochondrial Fe/S proteins. May play a role in the transfer of pre-assembled Fe/S clusters to target apoproteins. This chain is Cytosolic Fe-S cluster assembly factor NAR1 (NAR1), found in Cryptococcus neoformans var. neoformans serotype D (strain JEC21 / ATCC MYA-565) (Filobasidiella neoformans).